The sequence spans 137 residues: Large ribosomal subunit protein uL14A (137 aa).

Ser2 carries the N-acetylserine modification. Lys106 and Lys110 each carry N6,N6-dimethyllysine; by RKM1.

Belongs to the universal ribosomal protein uL14 family. As to quaternary structure, component of the large ribosomal subunit (LSU). Mature yeast ribosomes consist of a small (40S) and a large (60S) subunit. The 40S small subunit contains 1 molecule of ribosomal RNA (18S rRNA) and 33 different proteins (encoded by 57 genes). The large 60S subunit contains 3 rRNA molecules (25S, 5.8S and 5S rRNA) and 46 different proteins (encoded by 81 genes). Methylated by RKM1 at 2 different sites, but it is unclear which are the 2 methylated residues among Lys-40, Lys-106 and/or Lys-110.

The protein resides in the cytoplasm. Component of the ribosome, a large ribonucleoprotein complex responsible for the synthesis of proteins in the cell. The small ribosomal subunit (SSU) binds messenger RNAs (mRNAs) and translates the encoded message by selecting cognate aminoacyl-transfer RNA (tRNA) molecules. The large subunit (LSU) contains the ribosomal catalytic site termed the peptidyl transferase center (PTC), which catalyzes the formation of peptide bonds, thereby polymerizing the amino acids delivered by tRNAs into a polypeptide chain. The nascent polypeptides leave the ribosome through a tunnel in the LSU and interact with protein factors that function in enzymatic processing, targeting, and the membrane insertion of nascent chains at the exit of the ribosomal tunnel. The sequence is that of Large ribosomal subunit protein uL14A from Saccharomyces cerevisiae (strain ATCC 204508 / S288c) (Baker's yeast).